Consider the following 567-residue polypeptide: DNA ligase (567 aa).

E260 lines the ATP pocket. The active-site N6-AMP-lysine intermediate is the K262. ATP is bound by residues R267, R282, E312, F352, R427, and K433.

Belongs to the ATP-dependent DNA ligase family. Requires Mg(2+) as cofactor.

The enzyme catalyses ATP + (deoxyribonucleotide)n-3'-hydroxyl + 5'-phospho-(deoxyribonucleotide)m = (deoxyribonucleotide)n+m + AMP + diphosphate.. Its function is as follows. DNA ligase that seals nicks in double-stranded DNA during DNA replication, DNA recombination and DNA repair. The protein is DNA ligase of Methanococcoides burtonii (strain DSM 6242 / NBRC 107633 / OCM 468 / ACE-M).